Consider the following 257-residue polypeptide: Pyridoxine 5'-phosphate synthase (257 aa).

Residue asparagine 6 coordinates 3-amino-2-oxopropyl phosphate. Residue 8-9 (DH) participates in 1-deoxy-D-xylulose 5-phosphate binding. Residue arginine 17 participates in 3-amino-2-oxopropyl phosphate binding. Residue histidine 41 is the Proton acceptor of the active site. 1-deoxy-D-xylulose 5-phosphate contacts are provided by arginine 43 and histidine 48. The active-site Proton acceptor is glutamate 68. Threonine 98 serves as a coordination point for 1-deoxy-D-xylulose 5-phosphate. Histidine 210 (proton donor) is an active-site residue. 3-amino-2-oxopropyl phosphate-binding positions include glycine 211 and 232–233 (GQ).

It belongs to the PNP synthase family. Homooctamer; tetramer of dimers.

It is found in the cytoplasm. The enzyme catalyses 3-amino-2-oxopropyl phosphate + 1-deoxy-D-xylulose 5-phosphate = pyridoxine 5'-phosphate + phosphate + 2 H2O + H(+). It functions in the pathway cofactor biosynthesis; pyridoxine 5'-phosphate biosynthesis; pyridoxine 5'-phosphate from D-erythrose 4-phosphate: step 5/5. Functionally, catalyzes the complicated ring closure reaction between the two acyclic compounds 1-deoxy-D-xylulose-5-phosphate (DXP) and 3-amino-2-oxopropyl phosphate (1-amino-acetone-3-phosphate or AAP) to form pyridoxine 5'-phosphate (PNP) and inorganic phosphate. This Campylobacter jejuni subsp. jejuni serotype O:6 (strain 81116 / NCTC 11828) protein is Pyridoxine 5'-phosphate synthase.